The sequence spans 190 residues: Guanylate kinase (190 aa).

Positions 3-185 (NYIFIISAPS…SLEQLCKYFE (183 aa)) constitute a Guanylate kinase-like domain. 10–17 (APSGAGKS) serves as a coordination point for ATP.

It belongs to the guanylate kinase family.

It localises to the cytoplasm. It catalyses the reaction GMP + ATP = GDP + ADP. Essential for recycling GMP and indirectly, cGMP. This chain is Guanylate kinase, found in Francisella tularensis subsp. holarctica (strain LVS).